We begin with the raw amino-acid sequence, 31 residues long: Cytochrome b6-f complex subunit 6 (31 aa).

The helical transmembrane segment at valine 4–glycine 24 threads the bilayer.

The protein belongs to the PetL family. As to quaternary structure, the 4 large subunits of the cytochrome b6-f complex are cytochrome b6, subunit IV (17 kDa polypeptide, PetD), cytochrome f and the Rieske protein, while the 4 small subunits are PetG, PetL, PetM and PetN. The complex functions as a dimer.

The protein resides in the plastid. It is found in the chloroplast thylakoid membrane. Functionally, component of the cytochrome b6-f complex, which mediates electron transfer between photosystem II (PSII) and photosystem I (PSI), cyclic electron flow around PSI, and state transitions. PetL is important for photoautotrophic growth as well as for electron transfer efficiency and stability of the cytochrome b6-f complex. The polypeptide is Cytochrome b6-f complex subunit 6 (Oltmannsiellopsis viridis (Marine flagellate)).